Reading from the N-terminus, the 153-residue chain is Fucose mutarotase (153 aa).

Residue H24 is the Proton donor of the active site. A substrate-binding site is contributed by D32. The active site involves D69. 4 residues coordinate substrate: M79, Y119, Y137, and N139. The active site involves Y119.

Belongs to the RbsD / FucU family. In terms of assembly, mainly homodimer, but also exists as homotetramer, homooctamer, and homodecamer. The homodimeric form seems catalytically inactive.

The catalysed reaction is alpha-L-fucose = beta-L-fucose. The protein operates within carbohydrate metabolism; L-fucose metabolism. Its function is as follows. Involved in the interconversion between alpha- and beta-L-fucoses. L-Fucose (6-deoxy-L-galactose) exists as alpha-L-fucose (29.5%) and beta-L-fucose (70.5%), the beta-form is metabolized through the salvage pathway. GDP-L-fucose formed either by the de novo or salvage pathways is transported into the endoplasmic reticulum, where it serves as a substrate for N- and O-glycosylations by fucosyltransferases. Fucosylated structures expressed on cell surfaces or secreted in biological fluids are believed to play a critical role in cell-cell adhesion and recognition processes. In Bos taurus (Bovine), this protein is Fucose mutarotase (FUOM).